Here is a 447-residue protein sequence, read N- to C-terminus: N-succinylarginine dihydrolase (447 aa).

Substrate-binding positions include 19–28, Asn110, and 137–138; these read AGLSFGNEAS and HR. Residue Glu174 is part of the active site. Arg212 serves as a coordination point for substrate. His248 is a catalytic residue. Residues Asp250 and Asn359 each contribute to the substrate site. The active-site Nucleophile is the Cys365.

This sequence belongs to the succinylarginine dihydrolase family. In terms of assembly, homodimer.

The enzyme catalyses N(2)-succinyl-L-arginine + 2 H2O + 2 H(+) = N(2)-succinyl-L-ornithine + 2 NH4(+) + CO2. Its pathway is amino-acid degradation; L-arginine degradation via AST pathway; L-glutamate and succinate from L-arginine: step 2/5. In terms of biological role, catalyzes the hydrolysis of N(2)-succinylarginine into N(2)-succinylornithine, ammonia and CO(2). The polypeptide is N-succinylarginine dihydrolase (Escherichia coli O139:H28 (strain E24377A / ETEC)).